We begin with the raw amino-acid sequence, 226 residues long: Chalcone--flavanone isomerase 1B-1 (226 aa).

Residues threonine 50, asparagine 115, and threonine 192 each coordinate substrate.

This sequence belongs to the chalcone isomerase family.

The catalysed reaction is a chalcone = a flavanone.. The protein operates within secondary metabolite biosynthesis; flavonoid biosynthesis. Its function is as follows. Catalyzes the intramolecular cyclization of bicyclic chalcones into tricyclic (S)-flavanones. Responsible for the isomerization of 4,2',4',6'-tetrahydroxychalcone (also termed chalcone) into naringenin. This is Chalcone--flavanone isomerase 1B-1 (CHI1B1) from Glycine max (Soybean).